Consider the following 233-residue polypeptide: Enolase-phosphatase E1 (233 aa).

Belongs to the HAD-like hydrolase superfamily. MasA/MtnC family. In terms of assembly, monomer. Mg(2+) is required as a cofactor.

The catalysed reaction is 5-methylsulfanyl-2,3-dioxopentyl phosphate + H2O = 1,2-dihydroxy-5-(methylsulfanyl)pent-1-en-3-one + phosphate. The protein operates within amino-acid biosynthesis; L-methionine biosynthesis via salvage pathway; L-methionine from S-methyl-5-thio-alpha-D-ribose 1-phosphate: step 3/6. It functions in the pathway amino-acid biosynthesis; L-methionine biosynthesis via salvage pathway; L-methionine from S-methyl-5-thio-alpha-D-ribose 1-phosphate: step 4/6. Its function is as follows. Bifunctional enzyme that catalyzes the enolization of 2,3-diketo-5-methylthiopentyl-1-phosphate (DK-MTP-1-P) into the intermediate 2-hydroxy-3-keto-5-methylthiopentenyl-1-phosphate (HK-MTPenyl-1-P), which is then dephosphorylated to form the acireductone 1,2-dihydroxy-3-keto-5-methylthiopentene (DHK-MTPene). The polypeptide is Enolase-phosphatase E1 (Hahella chejuensis (strain KCTC 2396)).